Consider the following 938-residue polypeptide: Isoleucine--tRNA ligase (938 aa).

The short motif at 58–68 (PYANGNIHIGH) is the 'HIGH' region element. Residue E561 coordinates L-isoleucyl-5'-AMP. The short motif at 602 to 606 (KMSKS) is the 'KMSKS' region element. An ATP-binding site is contributed by K605. Zn(2+) contacts are provided by C901, C904, C921, and C924.

It belongs to the class-I aminoacyl-tRNA synthetase family. IleS type 1 subfamily. As to quaternary structure, monomer. The cofactor is Zn(2+).

Its subcellular location is the cytoplasm. It carries out the reaction tRNA(Ile) + L-isoleucine + ATP = L-isoleucyl-tRNA(Ile) + AMP + diphosphate. In terms of biological role, catalyzes the attachment of isoleucine to tRNA(Ile). As IleRS can inadvertently accommodate and process structurally similar amino acids such as valine, to avoid such errors it has two additional distinct tRNA(Ile)-dependent editing activities. One activity is designated as 'pretransfer' editing and involves the hydrolysis of activated Val-AMP. The other activity is designated 'posttransfer' editing and involves deacylation of mischarged Val-tRNA(Ile). The sequence is that of Isoleucine--tRNA ligase from Yersinia pestis bv. Antiqua (strain Angola).